Consider the following 504-residue polypeptide: Occludin (504 aa).

Residues 1 to 57 are Cytoplasmic-facing; the sequence is MFSKKSYDGPPAGYGPPTGYGAPTADYGYGSPPPGSYYVDDAPQLFYKWTSPPGAVR. The MARVEL domain occupies 51–253; sequence SPPGAVRGLQ…ICFFAQKTRS (203 aa). A helical membrane pass occupies residues 58-80; that stretch reads GLQAGVLVLCIAIFACVASTLAW. The Extracellular portion of the chain corresponds to 81-123; that stretch reads DYGYGLGGAYGTGLGGFYGSNYYGSGLSYSYGYGGYYGGVNQR. A helical membrane pass occupies residues 124–148; it reads TANGFMIAMAVLCFLAQLGLLVAAL. The Cytoplasmic segment spans residues 149-158; that stretch reads SKSGATRSRR. Residues 159-183 form a helical membrane-spanning segment; the sequence is FYLAVLVLSAVLAFVMLIASIVYIM. The Extracellular segment spans residues 184 to 227; it reads GVNPQAQMSSGYYYSPLLAMCSQAYGSTYLNQYIYHYCTVDPQE. A disulfide bridge connects residues Cys-204 and Cys-221. A helical membrane pass occupies residues 228–249; that stretch reads AVAAVCGFLIVILLCLICFFAQ. Residues 250 to 504 lie on the Cytoplasmic side of the membrane; it reads KTRSKIWRYG…MVSAYDKVRG (255 aa). The segment at 324 to 396 is disordered; sequence PSGTYSSRGD…VESSDERDQE (73 aa). Residues 361 to 370 are compositionally biased toward basic residues; sequence PARRGRRRRR. Residues Tyr-379 and Tyr-383 each carry the phosphotyrosine modification. Residues 379–385 form an interaction with TJP1 region; that stretch reads YETDYTT. The region spanning 396–504 is the OCEL domain; sequence EQWASLYPPI…MVSAYDKVRG (109 aa). The stretch at 412 to 471 forms a coiled coil; it reads QRYKQEFDTDLKRYKQLCAEMDSINDRLNQLSRRLDSITEDSPQYQDVAEEYNQLKDLKR.

Belongs to the ELL/occludin family. In terms of assembly, interacts with TJP1 and TJP3. In terms of processing, phosphorylated. Localized at tight junctions of both epithelial and endothelial cells. Highly expressed in lung and liver. Expressed at a lower level in brain.

It localises to the cell membrane. Its subcellular location is the cell junction. The protein resides in the tight junction. May play a role in the formation and regulation of the tight junction (TJ) paracellular permeability barrier. Interacts with ZO-1. The polypeptide is Occludin (OCLN) (Gallus gallus (Chicken)).